We begin with the raw amino-acid sequence, 504 residues long: Glucose-6-phosphate isomerase (504 aa).

Glu333 serves as the catalytic Proton donor. Residues His364 and Lys473 contribute to the active site.

It belongs to the GPI family.

It is found in the cytoplasm. It carries out the reaction alpha-D-glucose 6-phosphate = beta-D-fructose 6-phosphate. It functions in the pathway carbohydrate biosynthesis; gluconeogenesis. Its pathway is carbohydrate degradation; glycolysis; D-glyceraldehyde 3-phosphate and glycerone phosphate from D-glucose: step 2/4. Catalyzes the reversible isomerization of glucose-6-phosphate to fructose-6-phosphate. In Stenotrophomonas maltophilia (strain R551-3), this protein is Glucose-6-phosphate isomerase.